A 396-amino-acid polypeptide reads, in one-letter code: Elongation factor Tu 2 (396 aa).

The tr-type G domain maps to 10–206 (KPHVNIGTIG…AVDEYIPTPE (197 aa)). Positions 19–26 (GHVDHGKT) are G1. Position 19-26 (19-26 (GHVDHGKT)) interacts with GTP. Threonine 26 contacts Mg(2+). The G2 stretch occupies residues 60-64 (GITIN). The interval 81–84 (DCPG) is G3. Residues 81–85 (DCPGH) and 136–139 (NKVD) contribute to the GTP site. The tract at residues 136–139 (NKVD) is G4. The tract at residues 174 to 176 (SAL) is G5.

The protein belongs to the TRAFAC class translation factor GTPase superfamily. Classic translation factor GTPase family. EF-Tu/EF-1A subfamily. In terms of assembly, monomer.

The protein resides in the cytoplasm. The enzyme catalyses GTP + H2O = GDP + phosphate + H(+). In terms of biological role, GTP hydrolase that promotes the GTP-dependent binding of aminoacyl-tRNA to the A-site of ribosomes during protein biosynthesis. This is Elongation factor Tu 2 from Hyphomonas neptunium (strain ATCC 15444).